The following is a 495-amino-acid chain: Serine/threonine-protein phosphatase 2A regulatory subunit sur-6 (495 aa).

The disordered stretch occupies residues 1-27 (MVMEVDEPAVAATTSQNQPQEHANDFD). The segment covering 12-21 (ATTSQNQPQE) has biased composition (polar residues). 6 WD repeats span residues 64–103 (TEAD…KYVK), 130–171 (EIDE…RKIG), 215–253 (AHTY…ESFN), 264–304 (ELTE…LCDA), 323–361 (EIIA…QPVE), and 378–419 (ENDS…DAKT). Positions 439–459 (SAKRKRNNLSSSGETTEEDLS) are disordered. The stretch at 464–495 (QFDRKILHTAWHPKDNIIALAATNNLYIFSDV) is one WD 7 repeat.

It belongs to the phosphatase 2A regulatory subunit B family. As to quaternary structure, part of a complex consisting of a common heterodimeric core enzyme, composed of catalytic subunit let-92 and constant regulatory subunit paa-1, that associates with a variety of regulatory subunits which confer distinct properties to the holoenzyme. Interacts with let-92.

It is found in the cytoplasm. In terms of biological role, probable regulatory subunit of serine/threonine phosphatase let-92. Together with let-92 and constant regulatory subunit paa-1, positively regulates centriole duplication during early embryonic cell divisions by preventing the degradation of sas-5 and kinase zyg-1. In addition, during vulva development, may play a role with phosphatase let-92 and regulatory subunit paa-1 in the induction of vulva cell precursors by positively regulating let-60/Ras-MAP kinase signaling, probably by promoting lin-45 activation. In intestinal epithelial cells, may play a role in the late secretory pathway probably by regulating the exocyst, a protein complex involved in targeting secretory vesicles to the plasma membrane. In Caenorhabditis elegans, this protein is Serine/threonine-protein phosphatase 2A regulatory subunit sur-6.